The following is a 167-amino-acid chain: Translationally-controlled tumor protein homolog (167 aa).

A TCTP domain is found at 1–167 (MIIFTDVISG…WKHGVSEDKI (167 aa)).

This sequence belongs to the TCTP family.

Its subcellular location is the cytoplasm. It localises to the cytoskeleton. Its function is as follows. Involved in protein synthesis. Involved in microtubule stabilization. The protein is Translationally-controlled tumor protein homolog of Debaryomyces hansenii (strain ATCC 36239 / CBS 767 / BCRC 21394 / JCM 1990 / NBRC 0083 / IGC 2968) (Yeast).